Here is a 199-residue protein sequence, read N- to C-terminus: Probable thymidylate kinase (199 aa).

Residue 9–16 (GIDGCGKT) participates in ATP binding.

It belongs to the thymidylate kinase family.

The catalysed reaction is dTMP + ATP = dTDP + ADP. The chain is Probable thymidylate kinase from Methanococcus maripaludis (strain DSM 14266 / JCM 13030 / NBRC 101832 / S2 / LL).